Reading from the N-terminus, the 79-residue chain is Large ribosomal subunit protein uL29 (79 aa).

The protein belongs to the universal ribosomal protein uL29 family.

The chain is Large ribosomal subunit protein uL29 from Tropheryma whipplei (strain TW08/27) (Whipple's bacillus).